The sequence spans 82 residues: Beta-insect toxin AaBTxL1 (82 aa).

Residues 1-22 (MMKLVLFSVIVILFSLIGSIHG) form the signal peptide. The LCN-type CS-alpha/beta domain occupies 25-82 (VPGNYPLDRSGKKYPCTITWKKNPSCIQICKKHGVKYGYCFDFQCWCEIFGRLKTFKI). Cystine bridges form between Cys-40–Cys-64, Cys-50–Cys-69, and Cys-54–Cys-71.

It belongs to the long (3 C-C) scorpion toxin superfamily. Sodium channel inhibitor family. Beta subfamily. In terms of tissue distribution, expressed by the venom gland.

It is found in the secreted. In terms of biological role, shifts the voltage of activation of para/tipE voltage-dependent sodium channels (Nav) toward more negative potentials. This chain is Beta-insect toxin AaBTxL1, found in Androctonus australis (Sahara scorpion).